We begin with the raw amino-acid sequence, 37 residues long: Cytochrome bd-I ubiquinol oxidase subunit X (37 aa).

Residues 4–24 traverse the membrane as a helical segment; it reads FAWILGTLLACSFGVITALAL.

It belongs to the cytochrome ubiquinol oxidase subunit X family. As to quaternary structure, may be a subunit of cytochrome bd-I ubiquinol oxidase. Probably interacts with CydA and CydB.

It is found in the cell inner membrane. The catalysed reaction is 2 a ubiquinol + O2(in) + 4 H(+)(in) = 2 a ubiquinone + 2 H2O(in) + 4 H(+)(out). The protein operates within energy metabolism; oxidative phosphorylation. Required for correct functioning of cytochrome bd-I oxidase. This protein and AppX may have some functional overlap. This Escherichia coli (strain K12) protein is Cytochrome bd-I ubiquinol oxidase subunit X (cydX).